The following is a 750-amino-acid chain: Photosystem I P700 chlorophyll a apoprotein A1 (750 aa).

Transmembrane regions (helical) follow at residues 70-93 (VFSAHFGQLSIIFLWLSGMYFHGA), 156-179 (LYCTAIGALVFAALMLFAGWFHYH), 195-219 (LNHHLAGLLGLGSLSWAGHQVHVSL), 291-309 (IAHHHLAIAILFLIAGHMY), 346-369 (WHAQLSLNLAMLGSLTIVVAHHMY), 385-411 (LSLFTHHMWIGGFLIVGAAAHAAIFMV), 433-455 (AIISHLNWACIFLGFHSFGLYIH), and 531-549 (FLVHHIHAFTIHVTVLILL). 2 residues coordinate [4Fe-4S] cluster: Cys-573 and Cys-582. 2 helical membrane-spanning segments follow: residues 589-610 (HVFLGLFWMYNSISVVIFHFSW) and 664-686 (LSAYGLFFLGAHFVWAFSLMFLF). His-675 contacts chlorophyll a'. Positions 683 and 691 each coordinate chlorophyll a. Trp-692 contributes to the phylloquinone binding site. The chain crosses the membrane as a helical span at residues 724-744 (AVGVTHYLLGGIATTWAFFLA).

This sequence belongs to the PsaA/PsaB family. In terms of assembly, the PsaA/B heterodimer binds the P700 chlorophyll special pair and subsequent electron acceptors. PSI consists of a core antenna complex that captures photons, and an electron transfer chain that converts photonic excitation into a charge separation. The eukaryotic PSI reaction center is composed of at least 11 subunits. It depends on P700 is a chlorophyll a/chlorophyll a' dimer, A0 is one or more chlorophyll a, A1 is one or both phylloquinones and FX is a shared 4Fe-4S iron-sulfur center. as a cofactor.

The protein resides in the plastid. The protein localises to the chloroplast thylakoid membrane. It carries out the reaction reduced [plastocyanin] + hnu + oxidized [2Fe-2S]-[ferredoxin] = oxidized [plastocyanin] + reduced [2Fe-2S]-[ferredoxin]. Its function is as follows. PsaA and PsaB bind P700, the primary electron donor of photosystem I (PSI), as well as the electron acceptors A0, A1 and FX. PSI is a plastocyanin-ferredoxin oxidoreductase, converting photonic excitation into a charge separation, which transfers an electron from the donor P700 chlorophyll pair to the spectroscopically characterized acceptors A0, A1, FX, FA and FB in turn. Oxidized P700 is reduced on the lumenal side of the thylakoid membrane by plastocyanin. This Vitis vinifera (Grape) protein is Photosystem I P700 chlorophyll a apoprotein A1.